Reading from the N-terminus, the 137-residue chain is Small ribosomal subunit protein uS12 (137 aa).

The disordered stretch occupies residues 1–57; that stretch reads MPTINQLVRKPRQSKIKKSDSPALNKGFNSKKKKFTDLNSPQKRGVCTRVGTMTPRK. Residue Asp-102 is modified to 3-methylthioaspartic acid. The segment at 118–137 is disordered; sequence SGVDGRRQGRSLYGTKKPKN.

The protein belongs to the universal ribosomal protein uS12 family. As to quaternary structure, part of the 30S ribosomal subunit. Contacts proteins S8 and S17. May interact with IF1 in the 30S initiation complex.

Functionally, with S4 and S5 plays an important role in translational accuracy. In terms of biological role, interacts with and stabilizes bases of the 16S rRNA that are involved in tRNA selection in the A site and with the mRNA backbone. Located at the interface of the 30S and 50S subunits, it traverses the body of the 30S subunit contacting proteins on the other side and probably holding the rRNA structure together. The combined cluster of proteins S8, S12 and S17 appears to hold together the shoulder and platform of the 30S subunit. In Staphylococcus aureus (strain COL), this protein is Small ribosomal subunit protein uS12.